The sequence spans 87 residues: Acyl-CoA-binding protein (87 aa).

Serine 2 is modified (N-acetylserine). The region spanning 2–87 is the ACB domain; sequence SQAEFEKAAE…VEELKQKYGI (86 aa). Lysine 8 carries the post-translational modification N6-acetyllysine; alternate. Residue lysine 8 is modified to N6-succinyllysine; alternate. Lysine 14 is an an acyl-CoA binding site. Lysine 17 carries the N6-succinyllysine modification. Lysine 19 is modified (N6-acetyllysine). Tyrosine 29 is modified (phosphotyrosine). Residues 29 to 33, lysine 51, lysine 55, and tyrosine 74 each bind an acyl-CoA; that span reads YSHYK. Residue lysine 51 is modified to N6-acetyllysine. Lysine 55 is modified (N6-acetyllysine; alternate). N6-succinyllysine; alternate is present on lysine 55. An N6-(2-hydroxyisobutyryl)lysine; alternate modification is found at lysine 55. An N6-malonyllysine; alternate modification is found at lysine 55. Lysine 77 is modified (N6-acetyllysine; alternate). Residue lysine 77 is modified to N6-succinyllysine; alternate.

It belongs to the ACBP family. In terms of assembly, monomer.

Its subcellular location is the endoplasmic reticulum. It is found in the golgi apparatus. Functionally, binds medium- and long-chain acyl-CoA esters with very high affinity and may function as an intracellular carrier of acyl-CoA esters. It is also able to displace diazepam from the benzodiazepine (BZD) recognition site located on the GABA type A receptor. It is therefore possible that this protein also acts as a neuropeptide to modulate the action of the GABA receptor. The chain is Acyl-CoA-binding protein (DBI) from Oryctolagus cuniculus (Rabbit).